A 751-amino-acid chain; its full sequence is Photosystem I P700 chlorophyll a apoprotein A1 (751 aa).

The next 8 helical transmembrane spans lie at 72–95, 158–181, 197–221, 293–311, 348–371, 387–413, 435–457, and 532–550; these read IFSAHFGHLAVVFVWLSGMYFHGA, LYCTAIGGLVMAALMLFAGWFHYH, MNHHLAGLLGLGSLGWAGHQIHVSM, TAHHHLAIAVLFIIAGHMY, WHAQLAINLALLGSLTIIVAQHMY, LSLFTHHMWIGGFLIVGAGAHGAIFMV, AIISHLNWVCIFLGFHSFGLYIH, and FMVHHIHAFTIHVTALILL. The [4Fe-4S] cluster site is built by C574 and C583. Helical transmembrane passes span 590–611 and 665–687; these read HVFLGLFWMYNSLSIVIFHFSW and LSAYGIMFLAGHFVFAFSLMFLF. H676 serves as a coordination point for chlorophyll a'. M684 and Y692 together coordinate chlorophyll a. Position 693 (W693) interacts with phylloquinone. A helical membrane pass occupies residues 725-745; it reads AVGVAHYLLGGIVTTWAFFLA.

Belongs to the PsaA/PsaB family. The PsaA/B heterodimer binds the P700 chlorophyll special pair and subsequent electron acceptors. PSI consists of a core antenna complex that captures photons, and an electron transfer chain that converts photonic excitation into a charge separation. The cyanobacterial PSI reaction center is composed of one copy each of PsaA,B,C,D,E,F,I,J,K,L,M and X, and forms trimeric complexes. It depends on PSI electron transfer chain: 5 chlorophyll a, 1 chlorophyll a', 2 phylloquinones and 3 4Fe-4S clusters. PSI core antenna: 90 chlorophyll a, 22 carotenoids, 3 phospholipids and 1 galactolipid. P700 is a chlorophyll a/chlorophyll a' dimer, A0 is one or more chlorophyll a, A1 is one or both phylloquinones and FX is a shared 4Fe-4S iron-sulfur center. as a cofactor.

Its subcellular location is the cellular thylakoid membrane. It catalyses the reaction reduced [plastocyanin] + hnu + oxidized [2Fe-2S]-[ferredoxin] = oxidized [plastocyanin] + reduced [2Fe-2S]-[ferredoxin]. Its function is as follows. PsaA and PsaB bind P700, the primary electron donor of photosystem I (PSI), as well as the electron acceptors A0, A1 and FX. PSI is a plastocyanin/cytochrome c6-ferredoxin oxidoreductase, converting photonic excitation into a charge separation, which transfers an electron from the donor P700 chlorophyll pair to the spectroscopically characterized acceptors A0, A1, FX, FA and FB in turn. Oxidized P700 is reduced on the lumenal side of the thylakoid membrane by plastocyanin or cytochrome c6. The protein is Photosystem I P700 chlorophyll a apoprotein A1 of Synechocystis sp. (strain ATCC 27184 / PCC 6803 / Kazusa).